We begin with the raw amino-acid sequence, 431 residues long: MYIKLDIQTEFEVKSLSDLPNFKKLMGNLKMKINKSQLARELNVDRRTIDKYLNGFTPKGTKNKTSKIDTYYEVIAALLSSDSKQIFYYKRVLWQYLTDNHGLKCSQSAFRAYINRKPEFRTYFDEGKRILSGHSVGVRYETPPGEQAQLDWKESIRFETKSGEIVYVNVAVLLLSYSRFKVFHLNISKSQSVLMSFMTEAFEMFGGVPKVIVTDNMKTVMDEARTEHFTGTINNKFAQFAQDFGFKVQPCIAGRPNTKGKVEAPMKLLDEIHTYQGRFTFEELHEFVQKLCARINQTFHQGTGKIPVFALKQEKNLLQPLPKSAIRDSYMIKHKLVKVNTSGMISYKSNQYSVPAEYQGKTVGLQVYDNQIYVYHNMKLIVQHKISQSKLNYKEEHYKKALAKSLPKYPNIDNLAKQNLSVIGEVYRNEE.

An HTH IS21-type domain is found at Pro-20–Leu-79. A DNA-binding region (H-T-H motif) is located at residues Lys-35 to Asn-54. The region spanning Tyr-140–Lys-315 is the Integrase catalytic domain.

This sequence belongs to the transposase IS21/IS408/IS1162 family.

Its function is as follows. Involved in the transposition of the insertion sequence. This chain is Transposase for insertion sequence element IS232, found in Bacillus thuringiensis subsp. berliner.